Consider the following 270-residue polypeptide: Putative ABC transporter ATP-binding protein MG304 (270 aa).

The region spanning 1 to 232 (MLQVKNLSFK…LDLFHNHHFN (232 aa)) is the ABC transporter domain. 36–43 (GHNGSGKS) contacts ATP.

The protein belongs to the ABC transporter superfamily.

The protein is Putative ABC transporter ATP-binding protein MG304 of Mycoplasma genitalium (strain ATCC 33530 / DSM 19775 / NCTC 10195 / G37) (Mycoplasmoides genitalium).